We begin with the raw amino-acid sequence, 113 residues long: UPF0102 protein Shal_4069 (113 aa).

The protein belongs to the UPF0102 family.

In Shewanella halifaxensis (strain HAW-EB4), this protein is UPF0102 protein Shal_4069.